Here is a 453-residue protein sequence, read N- to C-terminus: Exodeoxyribonuclease 7 large subunit (453 aa).

It belongs to the XseA family. Heterooligomer composed of large and small subunits.

It is found in the cytoplasm. The enzyme catalyses Exonucleolytic cleavage in either 5'- to 3'- or 3'- to 5'-direction to yield nucleoside 5'-phosphates.. Functionally, bidirectionally degrades single-stranded DNA into large acid-insoluble oligonucleotides, which are then degraded further into small acid-soluble oligonucleotides. The chain is Exodeoxyribonuclease 7 large subunit from Geobacter metallireducens (strain ATCC 53774 / DSM 7210 / GS-15).